Reading from the N-terminus, the 357-residue chain is D-alanine--D-alanine ligase (357 aa).

The 206-residue stretch at 134 to 339 (KQLFEHRGLP…YPDLIAKLID (206 aa)) folds into the ATP-grasp domain. 167 to 222 (NDKLTYPVFVKPANLGSSVGISKCNNEEELKSGITEAFQFDRKLVIEQGINAREIE) is a binding site for ATP. Positions 293, 306, and 308 each coordinate Mg(2+).

It belongs to the D-alanine--D-alanine ligase family. Mg(2+) serves as cofactor. The cofactor is Mn(2+).

Its subcellular location is the cytoplasm. The catalysed reaction is 2 D-alanine + ATP = D-alanyl-D-alanine + ADP + phosphate + H(+). It functions in the pathway cell wall biogenesis; peptidoglycan biosynthesis. In terms of biological role, cell wall formation. This is D-alanine--D-alanine ligase from Staphylococcus epidermidis (strain ATCC 12228 / FDA PCI 1200).